Consider the following 1904-residue polypeptide: MARVYSNWDRLVRATLRREQLRNTGQGHERVSSGLAGAVPPSLGRATNIDAILQAADEIQSEDPSVARILCEQAYSMAQNLDPNSDGRGVLQFKTGLMSVIKQKLAKRDGASIDRDRDIERLWEFYKLYKRRHRVDDIQKEEQKWRESGTTFSSNVGEILKMRKVFATLRALIEVLEVLSRDADPNGVGRSIRDELGRIKKADATLSAELTPYNIVPLEAQSMTNAIGVFPEVRGAVQAIRYTEHFPRLPVDFEISGQRDADMFDLLEYIFGFQRDNVRNQREHLVLTLSNAQSQLSIPGQNDPKIDENAVNEVFLKVLDNYIKWCKYLRIRVVYNKLEAIDRDRKLFLVSLYFLIWGEAANVRFLPECICYIFHNMAKELDAKLDHGEAVRADSCLTGTDTGSVSFLERIICPIYETISAETVRNNGGKAAHSEWRNYDDFNEYFWTPACFELSWPMKTESRFLSKPKGRKRTAKSSFVEHRTYLHLFRSFIRLWIFMFIMFQSLTIIAFRNEHLNIETFKILLSAGPTYAIMNFIECLLDVVLMYGAYSMARGMAISRLVIRFLWWGLGSAFVVYYYVKVLDERNKPNQNEFFFHLYILVLGCYAAVRLIFGLLVKLPACHALSEMSDQSFFQFFKWIYQERYFVGRGLFENLSDYCRYVAFWLVVLASKFTFAYFLQIKPLVKPTNTIIHLPPFQYSWHDIVSKSNDHALTIVSLWAPVLAIYLMDIHIWYTLLSAIIGGVMGAKARLGEIRTIEMVHKRFESFPEAFAQNLVSPVVKRVPLGQHASQDGQDMNKAYAAMFSPFWNEIIKSLREEDYLSNREMDLLSIPSNTGSLRLVQWPLFLLCSKILVAIDLAMECKETQEVLWRQICDDEYMAYAVQECYYSVEKILNSMVNDEGRRWVERIFLEISNSIEQGSLAITLNLKKLQLVVSRFTALTGLLIRNETPDLAKGAAKAMFDFYEVVTHDLLSHDLREQLDTWNILARARNEGRLFSRIAWPRDPEIIEQVKRLHLLLTVKDAAANVPKNLEARRRLEFFTNSLFMDMPQARPVAEMVPFSVFTPYYSETVLYSSSELRSENEDGISILFYLQKIFPDEWENFLERIGRSESTGDADLQASSTDALELRFWVSYRGQTLARTVRGMMYYRRALMLQSFLERRGLGVDDASLTNMPRGFESSIEARAQADLKFTYVVSCQIYGQQKQQKKPEATDIGLLLQRYEALRVAFIHSEDVGNGDGGSGGKKEFYSKLVKADIHGKDEEIYSIKLPGDPKLGEGKPENQNHAIVFTRGEAIQTIDMNQDNYLEEAIKMRNLLEEFHGKHGIRRPTILGVREHVFTGSVSSLAWFMSNQETSFVTLGQRVLAYPLKVRMHYGHPDVFDRIFHITRGGISKASRVINISEDIYAGFNSTLRQGNITHHEYIQVGKGRDVGLNQIALFEGKVAGGNGEQVLSRDVYRIGQLFDFFRMMSFYFTTVGFYVCTMMTVLTVYVFLYGRVYLAFSGADRAISRVAKLSGNTALDAALNAQFLVQIGIFTAVPMVMGFILELGLLKAIFSFITMQFQLCSVFFTFSLGTRTHYFGRTILHGGAKYRATGRGFVVQHIKFADNYRLYSRSHFVKAFEVALLLIIYIAYGYTDGGASSFVLLTISSWFLVISWLFAPYIFNPSGFEWQKTVEDFEDWVSWLMYKGGVGVKGELSWESWWEEEQAHIQTLRGRILETILSLRFFMFQYGIVYKLDLTRKNTSLALYGYSWVVLVVIVFLFKLFWYSPRKSSNILLALRFLQGVASITFIALIVVAIAMTDLSIPDMFACVLGFIPTGWALLSLAITWKQVLRVLGLWETVREFGRIYDAAMGMLIFSPIALLSWFPFISTFQSRLLFNQAFSRGLEISIILAGNRANVET.

The stretch at 100-132 (VIKQKLAKRDGASIDRDRDIERLWEFYKLYKRR) is one HAT 1 repeat. The next 6 helical transmembrane spans lie at 491–511 (SFIR…IIAF), 532–552 (AIMN…AYSM), 562–582 (VIRF…YVKV), 594–614 (FFFH…LIFG), 661–681 (YVAF…FLQI), and 722–742 (VLAI…AIIG). The LRR 1 repeat unit spans residues 678-701 (FLQIKPLVKPTNTIIHLPPFQYSW). LRR repeat units lie at residues 751–774 (LGEI…FAQN) and 925–948 (TLNL…LIRN). Residues 1074–1107 (YSSSELRSENEDGISILFYLQKIFPDEWENFLER) form an HAT 2 repeat. An LRR 4 repeat occupies 1159-1181 (FLERRGLGVDDASLTNMPRGFES). Transmembrane regions (helical) follow at residues 1474–1494 (FTTV…YVFL), 1529–1549 (FLVQ…ILEL), 1554–1574 (AIFS…TFSL), 1621–1641 (AFEV…DGGA), 1644–1664 (FVLL…APYI), 1747–1767 (LALY…FKLF), 1783–1803 (FLQG…IAMT), 1811–1831 (FACV…AITW), and 1853–1873 (AAMG…PFIS). The HAT 3 repeat unit spans residues 1659 to 1691 (LFAPYIFNPSGFEWQKTVEDFEDWVSWLMYKGG).

The protein belongs to the glycosyltransferase 48 family.

It is found in the cell membrane. The catalysed reaction is [(1-&gt;3)-beta-D-glucosyl](n) + UDP-alpha-D-glucose = [(1-&gt;3)-beta-D-glucosyl](n+1) + UDP + H(+). Involved in sporophytic and gametophytic development. Required for normal plant development and for the proper accumulation of callose at cell plates, cll walls and plasmodesmata. During pollen formation, required for the entry of microspores into mitosis. During plant growth and development, callose is found as a transitory component of the cell plate in dividing cells, is a major component of pollen mother cell walls and pollen tubes, and is found as a structural component of plasmodesmatal canals. Required for proper cell division and tissue patterning throughout plant organs, including stomatal patterning. This Arabidopsis thaliana (Mouse-ear cress) protein is Callose synthase 10 (CALS10).